A 213-amino-acid chain; its full sequence is AN1-type zinc finger protein 5 (213 aa).

An A20-type zinc finger spans residues 8-42; the sequence is TPGPMLCSTGCGFYGNPRTNGMCSVCYKEHLQRQQ. Zn(2+) is bound by residues Cys-14, Cys-18, Cys-30, and Cys-33. The interval 39–149 is disordered; that stretch reads QRQQNSGRMS…EEKAPELPKP (111 aa). Polar residues predominate over residues 40-75; that stretch reads RQQNSGRMSPMGTASGSNSPTSDSASVQRADTSLNN. Phosphoserine is present on residues Ser-48 and Ser-58. The segment covering 120–138 has biased composition (low complexity); that stretch reads SEPVVTQPSPSVSQPSTSQ. The segment covering 139–148 has biased composition (basic and acidic residues); sequence SEEKAPELPK. An AN1-type zinc finger spans residues 148–194; it reads KPKKNRCFMCRKKVGLTGFDCRCGNLFCGLHRYSDKHNCPYDYKAEA. Cys-154, Cys-157, Cys-168, Cys-170, Cys-175, His-178, His-184, and Cys-186 together coordinate Zn(2+). Lys-209 bears the N6-acetyllysine mark.

Interacts with ubiquitin and polyubiquitinated proteins. Identified in a heterotrimeric complex with ubiquitin and SQSTM1, where ZFAND5 and SQSTM1 both interact with the same ubiquitin molecule. Homooligomer and/or heterooligomer. Interacts (via A20-type domain) with IKBKG and RIPK1 and with TRAF6 (via AN1-type domain). In terms of tissue distribution, highly expressed in skeletal muscle. Expressed in fetal cochlea. Also expressed in infant brain, fetal heart, pancreatic islet, melanocyte, pineal gland, placenta, corneal stroma, and parathyroid tumor. Weakly expressed or undetectable in adult brain, heart, colon, thymus, spleen, kidney, liver, small intestine, placenta, lung and peripheral blood leukocytes. Expressed in rhabdomyosarcoma RD cells (at protein level).

It localises to the cytoplasm. Its function is as follows. Involved in protein degradation via the ubiquitin-proteasome system. May act by anchoring ubiquitinated proteins to the proteasome. Plays a role in ubiquitin-mediated protein degradation during muscle atrophy. Plays a role in the regulation of NF-kappa-B activation and apoptosis. Inhibits NF-kappa-B activation triggered by overexpression of RIPK1 and TRAF6 but not of RELA. Also inhibits tumor necrosis factor (TNF), IL-1 and TLR4-induced NF-kappa-B activation in a dose-dependent manner. Overexpression sensitizes cells to TNF-induced apoptosis. Is a potent inhibitory factor for osteoclast differentiation. This Homo sapiens (Human) protein is AN1-type zinc finger protein 5 (ZFAND5).